The primary structure comprises 369 residues: Transmembrane protein adipocyte-associated 1 (369 aa).

N-linked (GlcNAc...) asparagine glycosylation is present at Asn20. The next 7 membrane-spanning stretches (helical) occupy residues 45–65 (LLLL…LPLA), 73–93 (SSPI…VGIA), 120–140 (FFLL…GHLE), 148–168 (VLAI…TLEI), 189–209 (QFWL…VILP), 237–257 (LLQG…LCCV), and 262–282 (FLYF…GFFG). Asn329 carries N-linked (GlcNAc...) asparagine glycosylation.

Belongs to the UPF0359 family. In terms of tissue distribution, ubiquitous, with higher levels in heart, brain, lung, liver and kidney.

The protein localises to the membrane. The polypeptide is Transmembrane protein adipocyte-associated 1 (Tpra1) (Mus musculus (Mouse)).